A 265-amino-acid polypeptide reads, in one-letter code: Mlc titration factor A (265 aa).

Zn(2+) is bound by residues His111, His148, His152, and Glu211.

The protein belongs to the MtfA family. In terms of assembly, interacts with Mlc. It depends on Zn(2+) as a cofactor.

The protein resides in the cytoplasm. Functionally, involved in the modulation of the activity of the glucose-phosphotransferase system (glucose-PTS). Interacts with the transcriptional repressor Mlc, preventing its interaction with DNA and leading to the modulation of expression of genes regulated by Mlc, including ptsG, which encodes the PTS system glucose-specific EIICB component. Shows zinc-dependent metallopeptidase activity. The chain is Mlc titration factor A from Escherichia coli (strain UTI89 / UPEC).